A 229-amino-acid polypeptide reads, in one-letter code: Ribose-5-phosphate isomerase A (229 aa).

Substrate is bound by residues threonine 28 to threonine 31, aspartate 85 to aspartate 88, and lysine 98 to glycine 101. The Proton acceptor role is filled by glutamate 107. Lysine 125 contacts substrate.

The protein belongs to the ribose 5-phosphate isomerase family. In terms of assembly, homotetramer.

The catalysed reaction is aldehydo-D-ribose 5-phosphate = D-ribulose 5-phosphate. Its pathway is carbohydrate degradation; pentose phosphate pathway; D-ribose 5-phosphate from D-ribulose 5-phosphate (non-oxidative stage): step 1/1. Inhibited by D-4-phosphoerythronic acid. Functionally, involved in the first step of the non-oxidative branch of the pentose phosphate pathway. It catalyzes the reversible conversion of ribose-5-phosphate to ribulose 5-phosphate. The chain is Ribose-5-phosphate isomerase A from Pyrococcus horikoshii (strain ATCC 700860 / DSM 12428 / JCM 9974 / NBRC 100139 / OT-3).